We begin with the raw amino-acid sequence, 66 residues long: Photosystem II reaction center protein H (66 aa).

Residues 29 to 49 traverse the membrane as a helical segment; the sequence is PIMGLTMVLFLVFLLIILQIY.

It belongs to the PsbH family. As to quaternary structure, PSII is composed of 1 copy each of membrane proteins PsbA, PsbB, PsbC, PsbD, PsbE, PsbF, PsbH, PsbI, PsbJ, PsbK, PsbL, PsbM, PsbT, PsbX, PsbY, PsbZ, Psb30/Ycf12, at least 3 peripheral proteins of the oxygen-evolving complex and a large number of cofactors. It forms dimeric complexes.

Its subcellular location is the plastid. The protein localises to the chloroplast thylakoid membrane. Its function is as follows. One of the components of the core complex of photosystem II (PSII), required for its stability and/or assembly. PSII is a light-driven water:plastoquinone oxidoreductase that uses light energy to abstract electrons from H(2)O, generating O(2) and a proton gradient subsequently used for ATP formation. It consists of a core antenna complex that captures photons, and an electron transfer chain that converts photonic excitation into a charge separation. The chain is Photosystem II reaction center protein H from Thalassiosira pseudonana (Marine diatom).